The following is a 282-amino-acid chain: Pantothenate synthetase (282 aa).

30-37 (MGYLHEGH) serves as a coordination point for ATP. The active-site Proton donor is the histidine 37. Glutamine 61 lines the (R)-pantoate pocket. Position 61 (glutamine 61) interacts with beta-alanine. Position 147–150 (147–150 (GMKD)) interacts with ATP. (R)-pantoate is bound at residue glutamine 153. Residues valine 176 and 184-187 (KSSR) each bind ATP.

The protein belongs to the pantothenate synthetase family. As to quaternary structure, homodimer.

It is found in the cytoplasm. The enzyme catalyses (R)-pantoate + beta-alanine + ATP = (R)-pantothenate + AMP + diphosphate + H(+). The protein operates within cofactor biosynthesis; (R)-pantothenate biosynthesis; (R)-pantothenate from (R)-pantoate and beta-alanine: step 1/1. Catalyzes the condensation of pantoate with beta-alanine in an ATP-dependent reaction via a pantoyl-adenylate intermediate. This is Pantothenate synthetase from Bacillus cereus (strain ATCC 14579 / DSM 31 / CCUG 7414 / JCM 2152 / NBRC 15305 / NCIMB 9373 / NCTC 2599 / NRRL B-3711).